Consider the following 1747-residue polypeptide: Retroelement silencing factor 1 (1747 aa).

K216 participates in a covalent cross-link: Glycyl lysine isopeptide (Lys-Gly) (interchain with G-Cter in SUMO2). S221 carries the phosphoserine modification. Over residues 261 to 272 (TSAVPSQQYATQ) the composition is skewed to polar residues. The interval 261–280 (TSAVPSQQYATQTDKRPPPP) is disordered. A Glycyl lysine isopeptide (Lys-Gly) (interchain with G-Cter in SUMO2) cross-link involves residue K707. 3 disordered regions span residues 833 to 856 (PLTQKEKQNESTNGNSEVTPNVNQ), 923 to 956 (PQKPSLPNQQGIGSREPEKQLDNTTENKDFGFQK), and 1073 to 1101 (EGSVGQQTTYQTSEDQTADKTSSDSKDPA). The segment covering 842–856 (ESTNGNSEVTPNVNQ) has biased composition (polar residues). Over residues 937 to 956 (REPEKQLDNTTENKDFGFQK) the composition is skewed to basic and acidic residues. A compositionally biased stretch (polar residues) spans 1073–1087 (EGSVGQQTTYQTSED). Residues 1089–1101 (TADKTSSDSKDPA) are compositionally biased toward basic and acidic residues. K1136 is covalently cross-linked (Glycyl lysine isopeptide (Lys-Gly) (interchain with G-Cter in SUMO2)). The residue at position 1145 (S1145) is a Phosphoserine. Residues 1200-1274 (EEKQKEQCSP…KSLPRTEQEL (75 aa)) form a disordered region. Over residues 1217 to 1226 (QGERTSDRDV) the composition is skewed to basic and acidic residues. A Phosphothreonine modification is found at T1240. Positions 1242 to 1261 (PDGKSHFPELQDDSRKDTPK) are enriched in basic and acidic residues. S1358 carries the phosphoserine modification. Glycyl lysine isopeptide (Lys-Gly) (interchain with G-Cter in SUMO2) cross-links involve residues K1528 and K1636. The tract at residues 1686-1716 (KRTQKDSQERDNVNSRLSKRSFSADGFEMLQ) is disordered. A compositionally biased stretch (basic and acidic residues) spans 1689 to 1698 (QKDSQERDNV). S1708 is subject to Phosphoserine. Residue K1723 forms a Glycyl lysine isopeptide (Lys-Gly) (interchain with G-Cter in SUMO2) linkage. S1740 carries the phosphoserine modification.

In terms of assembly, interacts with SETDB1.

Its subcellular location is the nucleus. Plays a role in the regulation of imprinted gene expression, regulates repressive epigenetic modifications associated with SETDB1. Required for the recruitment or accumulation of SETDB1 to the endogenous retroviruses (ERVs) and maintenance of repressive chromatin configuration, contributing to a subset of the SETDB1-dependent ERV silencing in embryonic stem cells. The sequence is that of Retroelement silencing factor 1 from Homo sapiens (Human).